Reading from the N-terminus, the 339-residue chain is Annexin A2 (339 aa).

Ser2 bears the N-acetylserine mark. Residues 2-24 are S100A10-binding site; that stretch reads STVHEILCKLSLEGDHSTPPSAY. At Tyr24 the chain carries Phosphotyrosine; by SRC. Phosphoserine; by PKC is present on Ser26. Annexin repeat units follow at residues 33-104 and 105-176; these read FDAE…GLLK and TPAQ…ALAK. Lys49 carries the N6-acetyllysine; alternate modification. A Glycyl lysine isopeptide (Lys-Gly) (interchain with G-Cter in SUMO1); alternate cross-link involves residue Lys49. Residue Lys49 forms a Glycyl lysine isopeptide (Lys-Gly) (interchain with G-Cter in SUMO2); alternate linkage. An N6-acetyllysine modification is found at Lys152. Position 184 is a phosphoserine (Ser184). Annexin repeat units lie at residues 189–261 and 265–336; these read ELID…NLVQ and NKPL…YLCG. Tyr199 is modified (phosphotyrosine). Lys227 is modified (N6-acetyllysine).

This sequence belongs to the annexin family. In terms of assembly, heterotetramer containing 2 light chains of S100A10/p11 and 2 heavy chains of ANXA2/p36. Interacts with ATP1B1. Interacts with DYSF. Interacts with COCH. Interacts (via repeat Annexin 1) with PCSK9 (via the C-terminal domain); the interaction inhibits the degradation of LDLR. Interacts with CEACAM1 (via the cytoplasmic domain); this interaction is regulated by phosphorylation of CEACAM1. Interacts with APPL2 and APPL1; targets APPL2 to endosomes and acting in parallel to RAB5A. Interacts with S100A4. May interact with UBAP2. Interacts with PLEKHG4B; this interaction is required for PLEKHG4B localization to cell-cell adhesions. Post-translationally, ISGylated.

Its subcellular location is the secreted. It is found in the extracellular space. It localises to the extracellular matrix. The protein localises to the basement membrane. Functionally, calcium-regulated membrane-binding protein whose affinity for calcium is greatly enhanced by anionic phospholipids. It binds two calcium ions with high affinity. May be involved in heat-stress response. Inhibits PCSK9-enhanced LDLR degradation, probably reduces PCSK9 protein levels via a translational mechanism but also competes with LDLR for binding with PCSK9. Binds to endosomes damaged by phagocytosis of particulate wear debris and participates in endosomal membrane stabilization, thereby limiting NLRP3 inflammasome activation. Required for endothelial cell surface plasmin generation and may support fibrinolytic surveillance and neoangiogenesis. The polypeptide is Annexin A2 (ANXA2) (Canis lupus familiaris (Dog)).